A 151-amino-acid polypeptide reads, in one-letter code: Nucleoside diphosphate kinase (151 aa).

Residues lysine 10, phenylalanine 58, arginine 86, threonine 92, arginine 103, and asparagine 113 each coordinate ATP. Histidine 116 acts as the Pros-phosphohistidine intermediate in catalysis.

Belongs to the NDK family. As to quaternary structure, homotetramer. Mg(2+) serves as cofactor.

It is found in the cytoplasm. The enzyme catalyses dZDP + ATP = dZTP + ADP. It catalyses the reaction a 2'-deoxyribonucleoside 5'-diphosphate + ATP = a 2'-deoxyribonucleoside 5'-triphosphate + ADP. It carries out the reaction a ribonucleoside 5'-diphosphate + ATP = a ribonucleoside 5'-triphosphate + ADP. It participates in purine metabolism. In terms of biological role, major role in the synthesis of nucleoside triphosphates other than ATP. The ATP gamma phosphate is transferred to the NDP beta phosphate via a ping-pong mechanism, using a phosphorylated active-site intermediate. (Microbial infection) Catalyzes the phosphorylation of dZDP to dZTP, when the bacterium is infected by a phage that produces the substrate for the synthesis of dZTP (2- amino-2'-deoxyadenosine 5'-triphosphate), which is then used by the phage as a DNA polymerase substrate. The sequence is that of Nucleoside diphosphate kinase from Synechococcus sp. (strain CC9605).